A 250-amino-acid polypeptide reads, in one-letter code: tRNA (guanine-N(1)-)-methyltransferase (250 aa).

Residues glycine 116 and 136 to 141 (IGDYVL) each bind S-adenosyl-L-methionine.

This sequence belongs to the RNA methyltransferase TrmD family. Homodimer.

Its subcellular location is the cytoplasm. The catalysed reaction is guanosine(37) in tRNA + S-adenosyl-L-methionine = N(1)-methylguanosine(37) in tRNA + S-adenosyl-L-homocysteine + H(+). In terms of biological role, specifically methylates guanosine-37 in various tRNAs. In Pseudomonas fluorescens (strain ATCC BAA-477 / NRRL B-23932 / Pf-5), this protein is tRNA (guanine-N(1)-)-methyltransferase.